We begin with the raw amino-acid sequence, 291 residues long: Meteorin (291 aa).

Residues 1 to 21 (MLVAALLCALCCGLLAASARA) form the signal peptide. 5 disulfides stabilise this stretch: Cys-28–Cys-49, Cys-80–Cys-116, Cys-169–Cys-240, Cys-172–Cys-264, and Cys-182–Cys-286.

The protein belongs to the meteorin family. Monomer.

The protein localises to the secreted. Functionally, involved in both glial cell differentiation and axonal network formation during neurogenesis. Promotes astrocyte differentiation and transforms cerebellar astrocytes into radial glia. Also induces axonal extension in small and intermediate neurons of sensory ganglia by activating nearby satellite glia. This is Meteorin (Metrn) from Rattus norvegicus (Rat).